We begin with the raw amino-acid sequence, 347 residues long: Probable dual-specificity RNA methyltransferase RlmN (347 aa).

E94 serves as the catalytic Proton acceptor. Residues 100–334 (TETRTTACVS…AKVRHSRGKD (235 aa)) form the Radical SAM core domain. C107 and C339 form a disulfide bridge. Residues C114, C118, and C121 each coordinate [4Fe-4S] cluster. S-adenosyl-L-methionine contacts are provided by residues 165–166 (GE), S197, 220–222 (SLH), and N296. C339 (S-methylcysteine intermediate) is an active-site residue.

It belongs to the radical SAM superfamily. RlmN family. Requires [4Fe-4S] cluster as cofactor.

It localises to the cytoplasm. It catalyses the reaction adenosine(2503) in 23S rRNA + 2 reduced [2Fe-2S]-[ferredoxin] + 2 S-adenosyl-L-methionine = 2-methyladenosine(2503) in 23S rRNA + 5'-deoxyadenosine + L-methionine + 2 oxidized [2Fe-2S]-[ferredoxin] + S-adenosyl-L-homocysteine. The catalysed reaction is adenosine(37) in tRNA + 2 reduced [2Fe-2S]-[ferredoxin] + 2 S-adenosyl-L-methionine = 2-methyladenosine(37) in tRNA + 5'-deoxyadenosine + L-methionine + 2 oxidized [2Fe-2S]-[ferredoxin] + S-adenosyl-L-homocysteine. Functionally, specifically methylates position 2 of adenine 2503 in 23S rRNA and position 2 of adenine 37 in tRNAs. The chain is Probable dual-specificity RNA methyltransferase RlmN from Flavobacterium psychrophilum (strain ATCC 49511 / DSM 21280 / CIP 103535 / JIP02/86).